A 422-amino-acid chain; its full sequence is Serine--tRNA ligase (422 aa).

230-232 (TAE) is a binding site for L-serine. Position 261–263 (261–263 (RAE)) interacts with ATP. Position 284 (Glu-284) interacts with L-serine. Residue 348–351 (EISS) participates in ATP binding. Ser-383 contacts L-serine.

The protein belongs to the class-II aminoacyl-tRNA synthetase family. Type-1 seryl-tRNA synthetase subfamily. As to quaternary structure, homodimer. The tRNA molecule binds across the dimer.

It is found in the cytoplasm. It catalyses the reaction tRNA(Ser) + L-serine + ATP = L-seryl-tRNA(Ser) + AMP + diphosphate + H(+). It carries out the reaction tRNA(Sec) + L-serine + ATP = L-seryl-tRNA(Sec) + AMP + diphosphate + H(+). It participates in aminoacyl-tRNA biosynthesis; selenocysteinyl-tRNA(Sec) biosynthesis; L-seryl-tRNA(Sec) from L-serine and tRNA(Sec): step 1/1. Catalyzes the attachment of serine to tRNA(Ser). Is also able to aminoacylate tRNA(Sec) with serine, to form the misacylated tRNA L-seryl-tRNA(Sec), which will be further converted into selenocysteinyl-tRNA(Sec). This is Serine--tRNA ligase from Pelotomaculum thermopropionicum (strain DSM 13744 / JCM 10971 / SI).